The following is a 480-amino-acid chain: Phenylalanine--tRNA ligase alpha subunit (480 aa).

L-phenylalanine is bound by residues T324 and F407. E409 contacts Mg(2+). F432 contributes to the L-phenylalanine binding site.

It belongs to the class-II aminoacyl-tRNA synthetase family. Phe-tRNA synthetase alpha subunit type 2 subfamily. Tetramer of two alpha and two beta subunits. It depends on Mg(2+) as a cofactor.

It localises to the cytoplasm. It catalyses the reaction tRNA(Phe) + L-phenylalanine + ATP = L-phenylalanyl-tRNA(Phe) + AMP + diphosphate + H(+). The chain is Phenylalanine--tRNA ligase alpha subunit from Methanocaldococcus jannaschii (strain ATCC 43067 / DSM 2661 / JAL-1 / JCM 10045 / NBRC 100440) (Methanococcus jannaschii).